A 255-amino-acid chain; its full sequence is Small ribosomal subunit protein eS1 (255 aa).

Over residues 1–18 the composition is skewed to basic residues; sequence MAVGKNKRLSKGKKGLKK. Residues 1 to 28 are disordered; the sequence is MAVGKNKRLSKGKKGLKKRTQDPFSRKD. A2 carries the N-acetylalanine; partial modification. The span at 19-28 shows a compositional bias: basic and acidic residues; it reads RTQDPFSRKD.

It belongs to the eukaryotic ribosomal protein eS1 family. As to quaternary structure, component of the small ribosomal subunit. Mature ribosomes consist of a small (40S) and a large (60S) subunit. The 40S subunit contains about 33 different proteins and 1 molecule of RNA (18S). The 60S subunit contains about 49 different proteins and 3 molecules of RNA (25S, 5.8S and 5S).

The protein localises to the cytoplasm. The protein is Small ribosomal subunit protein eS1 of Ajellomyces capsulatus (strain G186AR / H82 / ATCC MYA-2454 / RMSCC 2432) (Darling's disease fungus).